A 51-amino-acid chain; its full sequence is Large ribosomal subunit protein bL32c (51 aa).

It belongs to the bacterial ribosomal protein bL32 family.

It localises to the plastid. The protein resides in the chloroplast. This Oenothera elata subsp. hookeri (Hooker's evening primrose) protein is Large ribosomal subunit protein bL32c.